The sequence spans 399 residues: Phosphopentomutase (399 aa).

6 residues coordinate Mn(2+): Asp10, Asp296, His301, Asp337, His338, and His349.

It belongs to the phosphopentomutase family. Mn(2+) serves as cofactor.

It localises to the cytoplasm. The enzyme catalyses 2-deoxy-alpha-D-ribose 1-phosphate = 2-deoxy-D-ribose 5-phosphate. It catalyses the reaction alpha-D-ribose 1-phosphate = D-ribose 5-phosphate. Its pathway is carbohydrate degradation; 2-deoxy-D-ribose 1-phosphate degradation; D-glyceraldehyde 3-phosphate and acetaldehyde from 2-deoxy-alpha-D-ribose 1-phosphate: step 1/2. Its function is as follows. Isomerase that catalyzes the conversion of deoxy-ribose 1-phosphate (dRib-1-P) and ribose 1-phosphate (Rib-1-P) to deoxy-ribose 5-phosphate (dRib-5-P) and ribose 5-phosphate (Rib-5-P), respectively. The sequence is that of Phosphopentomutase from Idiomarina loihiensis (strain ATCC BAA-735 / DSM 15497 / L2-TR).